Reading from the N-terminus, the 159-residue chain is NADH-quinone oxidoreductase subunit B (159 aa).

[4Fe-4S] cluster is bound by residues Cys36, Cys37, Cys102, and Cys132.

Belongs to the complex I 20 kDa subunit family. In terms of assembly, NDH-1 is composed of 14 different subunits. Subunits NuoB, C, D, E, F, and G constitute the peripheral sector of the complex. It depends on [4Fe-4S] cluster as a cofactor.

The protein localises to the cell inner membrane. The enzyme catalyses a quinone + NADH + 5 H(+)(in) = a quinol + NAD(+) + 4 H(+)(out). NDH-1 shuttles electrons from NADH, via FMN and iron-sulfur (Fe-S) centers, to quinones in the respiratory chain. Couples the redox reaction to proton translocation (for every two electrons transferred, four hydrogen ions are translocated across the cytoplasmic membrane), and thus conserves the redox energy in a proton gradient. This chain is NADH-quinone oxidoreductase subunit B, found in Paracidovorax citrulli (strain AAC00-1) (Acidovorax citrulli).